We begin with the raw amino-acid sequence, 384 residues long: S-adenosylmethionine synthase (384 aa).

Residue His-15 participates in ATP binding. Asp-17 contributes to the Mg(2+) binding site. Glu-43 serves as a coordination point for K(+). L-methionine is bound by residues Glu-56 and Gln-99. The segment at 99–109 is flexible loop; the sequence is QSPDINQGVDR. ATP-binding positions include 164–166, 230–231, Asp-239, 245–246, Ala-262, and Lys-266; these read DAK, RF, and RK. L-methionine is bound at residue Asp-239. Lys-270 is an L-methionine binding site.

It belongs to the AdoMet synthase family. In terms of assembly, homotetramer; dimer of dimers. Mg(2+) serves as cofactor. Requires K(+) as cofactor.

It is found in the cytoplasm. The enzyme catalyses L-methionine + ATP + H2O = S-adenosyl-L-methionine + phosphate + diphosphate. It functions in the pathway amino-acid biosynthesis; S-adenosyl-L-methionine biosynthesis; S-adenosyl-L-methionine from L-methionine: step 1/1. Catalyzes the formation of S-adenosylmethionine (AdoMet) from methionine and ATP. The overall synthetic reaction is composed of two sequential steps, AdoMet formation and the subsequent tripolyphosphate hydrolysis which occurs prior to release of AdoMet from the enzyme. The chain is S-adenosylmethionine synthase from Cronobacter sakazakii (strain ATCC BAA-894) (Enterobacter sakazakii).